The sequence spans 252 residues: Probable transcriptional regulatory protein Moth_1704 (252 aa).

It belongs to the TACO1 family.

Its subcellular location is the cytoplasm. This chain is Probable transcriptional regulatory protein Moth_1704, found in Moorella thermoacetica (strain ATCC 39073 / JCM 9320).